A 416-amino-acid chain; its full sequence is MAAEICREEAAKSMPAAAAGATAIARRRRRVEGFRFAAGSLEPPQEDADAGVARCGKRQRVAGARAGAGAATAGPCRPSAGAEFGSRWWPRYGVTSVFGRRREMEDAVSIRPDFLRGSTSSGKHHFFGVFDGHGCSHVARMCQDRMHELVVDAYKKAVSGKEAAAAAPAWKDVMEKGFARMDDEATIWAKSRTGGEPACRCELQTPARCDHVGSTAVVAVVGPNRVVVANSGDSRAVLCRAGVPVPLSVDHKPDRPDELERIKAAGGRVIYWDGARVLGVLAMSRAIGDGYLKPYVTSEPEVTVTERADDDECLILASDGLWDVVTNEMACEVVRACFRSNGPPSPPGCSRPKAVLPPPAGASGGGGGDAVVKGVDKAESDKACADAALLLAKLAIARRSADNVSVVVVDLRRPVP.

The PPM-type phosphatase domain maps to 91-411 (RYGVTSVFGR…DNVSVVVVDL (321 aa)). Residues D131, G132, and D319 each contribute to the Mn(2+) site. The segment covering 343–360 (PPSPPGCSRPKAVLPPPA) has biased composition (pro residues). The segment at 343–368 (PPSPPGCSRPKAVLPPPAGASGGGGG) is disordered. D402 is a Mn(2+) binding site.

Belongs to the PP2C family. Mg(2+) is required as a cofactor. The cofactor is Mn(2+).

It catalyses the reaction O-phospho-L-seryl-[protein] + H2O = L-seryl-[protein] + phosphate. The catalysed reaction is O-phospho-L-threonyl-[protein] + H2O = L-threonyl-[protein] + phosphate. The sequence is that of Probable protein phosphatase 2C 49 from Oryza sativa subsp. japonica (Rice).